The primary structure comprises 637 residues: Pyrethroid hydrolase (637 aa).

It catalyses the reaction (-)-trans-permethrin + H2O = (3-phenoxyphenyl)methanol + (1S,3R)-3-(2,2-dichlorovinyl)-2,2-dimethylcyclopropanecarboxylate + H(+). Its activity is regulated as follows. Inhibited by Hg(2+), Ag(+) and rho-chloromercuribenzoate. In terms of biological role, catalyzes the hydrolysis of pyrethroids pesticides. Hydrolyzes cis-permethrin at approximately equal rate to trans-permethrin. In Klebsiella sp, this protein is Pyrethroid hydrolase (estP).